Reading from the N-terminus, the 237-residue chain is Ditrans,polycis-undecaprenyl-diphosphate synthase ((2E,6E)-farnesyl-diphosphate specific) (237 aa).

Residue D11 is part of the active site. A Mg(2+)-binding site is contributed by D11. Substrate contacts are provided by residues 12-15 (GNGR), W16, R24, H28, and 56-58 (SIE). The Proton acceptor role is filled by N59. Residues R62, R179, and 185-187 (RLS) each bind substrate. E198 contributes to the Mg(2+) binding site.

The protein belongs to the UPP synthase family. In terms of assembly, homodimer. The cofactor is Mg(2+).

It catalyses the reaction 8 isopentenyl diphosphate + (2E,6E)-farnesyl diphosphate = di-trans,octa-cis-undecaprenyl diphosphate + 8 diphosphate. Functionally, catalyzes the sequential condensation of isopentenyl diphosphate (IPP) with (2E,6E)-farnesyl diphosphate (E,E-FPP) to yield (2Z,6Z,10Z,14Z,18Z,22Z,26Z,30Z,34E,38E)-undecaprenyl diphosphate (di-trans,octa-cis-UPP). UPP is the precursor of glycosyl carrier lipid in the biosynthesis of bacterial cell wall polysaccharide components such as peptidoglycan and lipopolysaccharide. The protein is Ditrans,polycis-undecaprenyl-diphosphate synthase ((2E,6E)-farnesyl-diphosphate specific) of Coxiella burnetii (strain RSA 493 / Nine Mile phase I).